A 144-amino-acid polypeptide reads, in one-letter code: Elicitor-responsive protein 3 (144 aa).

One can recognise a C2 domain in the interval 1-103; the sequence is MVQGTLEVLL…YTEGSIPPTV (103 aa). The Ca(2+) site is built by aspartate 20, aspartate 26, aspartate 73, aspartate 75, and aspartate 81. The segment at 123–144 is disordered; it reads TPEDDRDRGLSEEDIGGWKQSS.

Requires Ca(2+) as cofactor.

The sequence is that of Elicitor-responsive protein 3 (ERG3) from Oryza sativa subsp. indica (Rice).